The chain runs to 190 residues: Peptidyl-tRNA hydrolase (190 aa).

Y14 lines the tRNA pocket. H19 functions as the Proton acceptor in the catalytic mechanism. Residues Y63, N65, and N112 each coordinate tRNA.

It belongs to the PTH family. As to quaternary structure, monomer.

It localises to the cytoplasm. The enzyme catalyses an N-acyl-L-alpha-aminoacyl-tRNA + H2O = an N-acyl-L-amino acid + a tRNA + H(+). Functionally, hydrolyzes ribosome-free peptidyl-tRNAs (with 1 or more amino acids incorporated), which drop off the ribosome during protein synthesis, or as a result of ribosome stalling. Catalyzes the release of premature peptidyl moieties from peptidyl-tRNA molecules trapped in stalled 50S ribosomal subunits, and thus maintains levels of free tRNAs and 50S ribosomes. This chain is Peptidyl-tRNA hydrolase, found in Kosmotoga olearia (strain ATCC BAA-1733 / DSM 21960 / TBF 19.5.1).